The sequence spans 646 residues: Esterase EstA (646 aa).

A signal peptide spans 1 to 24 (MIRMALKPLVAACLLASLSTAPQA). Topologically, residues 25–397 (APSPYSTLVV…DSAASGDGNG (373 aa)) are extracellular. The active-site Nucleophile is S38. Catalysis depends on residues D310 and H313. Positions 366-646 (QNVGQWRGFV…SVSLALSLDF (281 aa)) constitute an Autotransporter domain. Residues 398 to 408 (YNLTLGGSYRI) form a beta stranded membrane-spanning segment. Over 409-410 (DE) the chain is Periplasmic. Residues 411–421 (AWRAGVAAGFY) traverse the membrane as a beta stranded segment. Over 422–437 (RQKLEAGAKDSDYRMN) the chain is Extracellular. Residues 438–447 (SYMASAFVQY) traverse the membrane as a beta stranded segment. At 448–451 (QENR) the chain is on the periplasmic side. A beta stranded transmembrane segment spans residues 452-461 (WWADAALTGG). Topologically, residues 462 to 488 (YLDYDDLKRKFALGGGERSEKGDTNGH) are extracellular. A beta stranded transmembrane segment spans residues 489–500 (LWAFSARLGYDI). At 501–507 (AQQADSP) the chain is on the periplasmic side. Residues 508–518 (WHLSPFVSADY) form a beta stranded membrane-spanning segment. Topologically, residues 519-547 (ARVEVDGYSEKGASATALDYDDQKRSSKR) are extracellular. The beta stranded transmembrane segment at 548–558 (LGAGLQGKYAF) threads the bilayer. The Periplasmic portion of the chain corresponds to 559–561 (GSD). A beta stranded membrane pass occupies residues 562-571 (TQLFAEYAHE). The Extracellular portion of the chain corresponds to 572–605 (REYEDDTQDLTMSLNSLPGNRFTLEGYTPQDHLN). The chain crosses the membrane as a beta stranded span at residues 606–615 (RVSLGFSQKL). The Periplasmic portion of the chain corresponds to 616 to 618 (APE). The chain crosses the membrane as a beta stranded span at residues 619–628 (LSLRGGYNWR). Topologically, residues 629–636 (KGEDDTQQ) are extracellular. Residues 637–646 (SVSLALSLDF) traverse the membrane as a beta stranded segment.

It belongs to the 'GDSL' lipolytic enzyme family.

The protein resides in the cell outer membrane. It carries out the reaction a carboxylic ester + H2O = an alcohol + a carboxylate + H(+). Functionally, esterase whose enzymatic activity is required for rhamnolipid production, all kinds of cell motility (swimming, swarming, and twitching), and biofilm formation; the exact role of EstA in these processes is unclear. In vitro, has pronounced esterase activities towards p-nitrophenyl esters of short acyl chain length (C4-C6) and Tween detergents. Also shows relatively high activity towards beta-naphthyl butyrate, whereas its activities towards triacylglycerols and acyls-CoA are negligible. The polypeptide is Esterase EstA (estA) (Pseudomonas aeruginosa (strain ATCC 15692 / DSM 22644 / CIP 104116 / JCM 14847 / LMG 12228 / 1C / PRS 101 / PAO1)).